The primary structure comprises 485 residues: Bifunctional protein GlmU (485 aa).

The pyrophosphorylase stretch occupies residues 1–241; sequence MSASDFSSAV…ARELAGVNDR (241 aa). UDP-N-acetyl-alpha-D-glucosamine-binding positions include 13 to 16, lysine 27, glutamine 84, and 89 to 90; these read LAAG and GT. Aspartate 114 serves as a coordination point for Mg(2+). 4 residues coordinate UDP-N-acetyl-alpha-D-glucosamine: glycine 151, glutamate 166, asparagine 181, and asparagine 239. Asparagine 239 contacts Mg(2+). A linker region spans residues 242–262; sequence VQLAEAGAELNRRTVIAAMRG. The tract at residues 263 to 485 is N-acetyltransferase; the sequence is GATIVDPATT…AAQNVHNQEG (223 aa). 2 residues coordinate UDP-N-acetyl-alpha-D-glucosamine: arginine 344 and lysine 362. The active-site Proton acceptor is histidine 374. UDP-N-acetyl-alpha-D-glucosamine is bound by residues tyrosine 377 and asparagine 388. Acetyl-CoA contacts are provided by residues alanine 391, 397–398, serine 416, and alanine 434; that span reads NY. The tract at residues 465 to 485 is disordered; that stretch reads RPGTAAAQAAEAAQNVHNQEG. The span at 469–478 shows a compositional bias: low complexity; sequence AAAQAAEAAQ.

This sequence in the N-terminal section; belongs to the N-acetylglucosamine-1-phosphate uridyltransferase family. The protein in the C-terminal section; belongs to the transferase hexapeptide repeat family. In terms of assembly, homotrimer. Mg(2+) serves as cofactor.

It is found in the cytoplasm. It carries out the reaction alpha-D-glucosamine 1-phosphate + acetyl-CoA = N-acetyl-alpha-D-glucosamine 1-phosphate + CoA + H(+). The enzyme catalyses N-acetyl-alpha-D-glucosamine 1-phosphate + UTP + H(+) = UDP-N-acetyl-alpha-D-glucosamine + diphosphate. Its pathway is nucleotide-sugar biosynthesis; UDP-N-acetyl-alpha-D-glucosamine biosynthesis; N-acetyl-alpha-D-glucosamine 1-phosphate from alpha-D-glucosamine 6-phosphate (route II): step 2/2. It participates in nucleotide-sugar biosynthesis; UDP-N-acetyl-alpha-D-glucosamine biosynthesis; UDP-N-acetyl-alpha-D-glucosamine from N-acetyl-alpha-D-glucosamine 1-phosphate: step 1/1. It functions in the pathway bacterial outer membrane biogenesis; LPS lipid A biosynthesis. Functionally, catalyzes the last two sequential reactions in the de novo biosynthetic pathway for UDP-N-acetylglucosamine (UDP-GlcNAc). The C-terminal domain catalyzes the transfer of acetyl group from acetyl coenzyme A to glucosamine-1-phosphate (GlcN-1-P) to produce N-acetylglucosamine-1-phosphate (GlcNAc-1-P), which is converted into UDP-GlcNAc by the transfer of uridine 5-monophosphate (from uridine 5-triphosphate), a reaction catalyzed by the N-terminal domain. This chain is Bifunctional protein GlmU, found in Corynebacterium glutamicum (strain R).